The following is a 454-amino-acid chain: Replicative DNA helicase DnaB (454 aa).

The interval 1-149 (MSELFSERIP…LDEADRKIME (149 aa)) is N-terminal domain (NTD). The interval 163 to 176 (KDILVQTYDNIEML) is linker helix. The region spanning 179–445 (RDGEITGIPT…NKFVNLERRF (267 aa)) is the SF4 helicase domain. The tract at residues 183 to 454 (ITGIPTGFTE…FDEAQIPPGA (272 aa)) is C-terminal domain (CTD). Residues serine 213, glycine 215, lysine 216, threonine 217, and alanine 218 each coordinate ATP. The Nucleophile role is filled by glutamate 241. The ATP site is built by arginine 250 and glutamine 362. SsDNA is bound by residues arginine 381, glutamate 382, and glycine 384. Residues lysine 418, glutamine 419, and arginine 420 each coordinate ATP.

It belongs to the helicase family. DnaB subfamily. In terms of assembly, homohexamer. Interacts with DnaG primase, as DnaB(6):DnaG(3). Interacts with the N-terminus of DnaI (shown with DnaI of B.subtilis), forms a helicase DnaB(6):DnaI(6) complex. The DnaB-DnaI complex is disrupted by DnaD (DnaD and DnaI from B.subtilis). A stable complex DnaI(6):DnaB(6):DnaG(3) fragment can be isolated; DnaI and DnaG do not contact each other (DnaI in this complex is derived from B.subtilis). Forms a complex with DNA clamp loader protein tau (shown with B.subtilis HolA) tau(3):DnaB(6); a single ATP hydrolysis even is sufficient for complex formation.

The catalysed reaction is Couples ATP hydrolysis with the unwinding of duplex DNA at the replication fork by translocating in the 5'-3' direction. This creates two antiparallel DNA single strands (ssDNA). The leading ssDNA polymer is the template for DNA polymerase III holoenzyme which synthesizes a continuous strand.. It carries out the reaction ATP + H2O = ADP + phosphate + H(+). Its function is as follows. The main replicative DNA helicase, it participates in initiation and elongation during chromosome replication. Travels ahead of the DNA replisome, separating double-stranded (ds)DNA into templates for DNA synthesis. Binding of single-stranded (ss)DNA to the hexamer suggests a 2-nucleotide step size for the helicase and a hand-over-hand mechanism of DNA unwinding. Has ssDNA-stimulated ATPase activity. DnaG primase stimulates the helicase activity (the helicase direction was not determine but is probably 5'-3'). Loaded onto DNA by helicase loader DnaI (shown with DnaI of B.subtilis); ATP-binding enhances loading and subsequent ATP hydrolysis dissociates the complex, leaving helicase on the DNA. Binds ssDNA and less well dsDNA, in the presence of ADPNP (probably 5'-adenylyl beta, gamma-imidodiphosphate, but not ATP) binding to both DNAs is improved. The chain is Replicative DNA helicase DnaB from Geobacillus stearothermophilus (Bacillus stearothermophilus).